A 308-amino-acid polypeptide reads, in one-letter code: Eukaryotic translation initiation factor 3 subunit G-B (308 aa).

Disordered regions lie at residues 1–35 and 176–227; these read MPTG…KQDP and STAD…DDNA. Over residues 185–194 the composition is skewed to low complexity; that stretch reads GAEPEPAQAP. A compositionally biased stretch (basic and acidic residues) spans 209 to 227; sequence GGSRRGESMQPNRRADDNA. The 79-residue stretch at 227-305 folds into the RRM domain; the sequence is ATIRVTNLSE…LILNVEWAKP (79 aa).

The protein belongs to the eIF-3 subunit G family. In terms of assembly, component of the eukaryotic translation initiation factor 3 (eIF-3) complex, which is composed of 13 subunits: eif3a, eif3b, eif3c, eif3d, eif3e, eif3f, eif3g, eif3h, eif3i, eif3j, eif3k, eif3l and eif3m.

Its subcellular location is the cytoplasm. Functionally, RNA-binding component of the eukaryotic translation initiation factor 3 (eIF-3) complex, which is involved in protein synthesis of a specialized repertoire of mRNAs and, together with other initiation factors, stimulates binding of mRNA and methionyl-tRNAi to the 40S ribosome. The eIF-3 complex specifically targets and initiates translation of a subset of mRNAs involved in cell proliferation. This subunit can bind 18S rRNA. This chain is Eukaryotic translation initiation factor 3 subunit G-B (eif3g-b), found in Xenopus laevis (African clawed frog).